The chain runs to 772 residues: Transducin-like enhancer protein 4 (772 aa).

Disordered stretches follow at residues 1 to 24 (MIRDLSKMYPQTRHPAPPHQPAQP) and 183 to 359 (LPIK…LTGL). A q domain region spans residues 1–137 (MIRDLSKMYP…AIIGQQLQAQ (137 aa)). The segment at 138–205 (HLSHAHGLPV…HQRDRDSIKS (68 aa)) is GP domain. Residues 184–203 (PIKDEKKHHDSDHQRDRDSI) are compositionally biased toward basic and acidic residues. Residues 204 to 213 (KSSSVSPSAS) are compositionally biased toward low complexity. The segment at 206–275 (SSVSPSASFR…SPRGSPAHSP (70 aa)) is ccN domain. Basic and acidic residues-rich tracts occupy residues 216 to 253 (AAEKHRNSTDYSSESKKQKTEEKDIAARYDSDGEKSDD) and 274 to 290 (SPRENGLDKPRLLKKDA). An SP domain region spans residues 276–452 (RENGLDKPRL…GGKPAYSFHV (177 aa)). Over residues 291–306 (PISPASIASSSSTPSS) the composition is skewed to low complexity. Positions 307-316 (KSKEHSHNEK) are enriched in basic and acidic residues. Residues 318–329 (TTPVSKSNTPTP) are compositionally biased toward polar residues. WD repeat units lie at residues 484-522 (NHGEVVCAVTISNPTRHVYTGGKGCVKVWDISHPGNKSP), 530-569 (NRDNYIRSCRLLPDGRTLIVGGEASTLSIWDLAAPTPRIK), 574-613 (SSAPACYALAISPDSKVCFSCCSDGNIAVWDLHNQTLVRQ), 616-655 (GHTDGASCIDISNDGTKLWTGGLDNTVRSWDLREGRQLQQ), 657-696 (DFTSQIFSLGYCPTGEWLAVGMENSNVEVLHVTKPDKYQL), 698-737 (LHESCVLSLKFAHCGKWFVSTGKDNLLNAWRTPYGASIFQ), and 739-772 (KESSSVLSCDISVDDKYIVTGSGDKKATVYEVIY).

It belongs to the WD repeat Groucho/TLE family. As to quaternary structure, interacts with tcf7, tcf7l1, ripply2.2/bowline, dscr6/ripply3 and foxd3. Associates with tbx6 in the presence of ripply2.2/bowline. Interacts with EFNB1 through the SP domain. Ubiquitinated by XIAP/BIRC4. Expressed at high levels in the spleen and ovary.

Its subcellular location is the nucleus. In terms of biological role, transcriptional corepressor. Functions with ripply2.2/bowline to down regulate transcription of tbx6-dependent gene expression. Represses transcription of siamois and nodal3. The chain is Transducin-like enhancer protein 4 (tle4) from Xenopus laevis (African clawed frog).